The primary structure comprises 249 residues: 1-(5-phosphoribosyl)-5-[(5-phosphoribosylamino)methylideneamino] imidazole-4-carboxamide isomerase (249 aa).

The active-site Proton acceptor is the D8. Residue D131 is the Proton donor of the active site.

This sequence belongs to the HisA/HisF family.

Its subcellular location is the cytoplasm. It catalyses the reaction 1-(5-phospho-beta-D-ribosyl)-5-[(5-phospho-beta-D-ribosylamino)methylideneamino]imidazole-4-carboxamide = 5-[(5-phospho-1-deoxy-D-ribulos-1-ylimino)methylamino]-1-(5-phospho-beta-D-ribosyl)imidazole-4-carboxamide. It participates in amino-acid biosynthesis; L-histidine biosynthesis; L-histidine from 5-phospho-alpha-D-ribose 1-diphosphate: step 4/9. This is 1-(5-phosphoribosyl)-5-[(5-phosphoribosylamino)methylideneamino] imidazole-4-carboxamide isomerase from Nitrosomonas europaea (strain ATCC 19718 / CIP 103999 / KCTC 2705 / NBRC 14298).